The chain runs to 1380 residues: DNA-directed RNA polymerase subunit beta (1380 aa).

This sequence belongs to the RNA polymerase beta chain family. As to quaternary structure, the RNAP catalytic core consists of 2 alpha, 1 beta, 1 beta' and 1 omega subunit. When a sigma factor is associated with the core the holoenzyme is formed, which can initiate transcription.

It catalyses the reaction RNA(n) + a ribonucleoside 5'-triphosphate = RNA(n+1) + diphosphate. Functionally, DNA-dependent RNA polymerase catalyzes the transcription of DNA into RNA using the four ribonucleoside triphosphates as substrates. This is DNA-directed RNA polymerase subunit beta from Ehrlichia ruminantium (strain Welgevonden).